Reading from the N-terminus, the 308-residue chain is GTP cyclohydrolase FolE2 (308 aa).

This sequence belongs to the GTP cyclohydrolase IV family.

The enzyme catalyses GTP + H2O = 7,8-dihydroneopterin 3'-triphosphate + formate + H(+). It participates in cofactor biosynthesis; 7,8-dihydroneopterin triphosphate biosynthesis; 7,8-dihydroneopterin triphosphate from GTP: step 1/1. Converts GTP to 7,8-dihydroneopterin triphosphate. This chain is GTP cyclohydrolase FolE2, found in Colwellia psychrerythraea (strain 34H / ATCC BAA-681) (Vibrio psychroerythus).